The sequence spans 146 residues: Acidic phospholipase A2 D (146 aa).

Residues 1–21 (MNPAHLLILAAVCVSPLGASS) form the signal peptide. The propeptide occupies 22-27 (NRPMPL). 7 disulfides stabilise this stretch: C38-C98, C53-C145, C55-C71, C70-C126, C77-C119, C87-C112, and C105-C117. Ca(2+) contacts are provided by Y54, G56, and G58. H74 is an active-site residue. A Ca(2+)-binding site is contributed by D75. D120 is an active-site residue.

This sequence belongs to the phospholipase A2 family. Group I subfamily. D49 sub-subfamily. Requires Ca(2+) as cofactor. Expressed by the venom gland.

The protein localises to the secreted. The catalysed reaction is a 1,2-diacyl-sn-glycero-3-phosphocholine + H2O = a 1-acyl-sn-glycero-3-phosphocholine + a fatty acid + H(+). PLA2 catalyzes the calcium-dependent hydrolysis of the 2-acyl groups in 3-sn-phosphoglycerides. This chain is Acidic phospholipase A2 D, found in Naja sputatrix (Malayan spitting cobra).